Consider the following 115-residue polypeptide: Thioredoxin-1 (115 aa).

Positions 2-114 (LKRCNFKNQV…RQKVLEHVSA (113 aa)) constitute a Thioredoxin domain. Catalysis depends on nucleophile residues C39 and C42. The cysteines at positions 39 and 42 are disulfide-linked.

Belongs to the thioredoxin family. In terms of tissue distribution, expressed in ASJ and ASI ciliated sensory neurons. Expressed in the intestine (at protein level).

Participates in various redox reactions through the reversible oxidation of its active center dithiol to a disulfide and catalyzes dithiol-disulfide exchange reactions. Shown to facilitate the reduction of insulin disulfide bonds. Might play a role in the reversible nitrosylation of cysteine residues in target proteins, and thereby contributing to the response to intracellular nitric oxide. Shapes the ASJ sensory neuron biphasic response to nitric oxide (NO) exposure; trans-nitrosylation activity might inhibit calcium flux to the cytoplasm in ASJ neurons when exposed to a NO stimulus, whereas de-nitrosylation activity might promote calcium flux when NO is diminished. By regulating the NO-induced ASJ sensory neuron activity, mediates the avoidance response to NO-producing organisms like P.aeruginosa. Positively regulates life span extension under normal and caloric restriction conditions, dauer formation and the oxidative stress response. Contributes to the down-regulation of expression of the insulin-like neuropeptide daf-28 in the ASJ neurons in a redox-independent fashion, thereby promoting dauer formation. Negatively regulates the nuclear localization of the intestinal skn-1 transcription factor in a p38 MAPK pathway-dependent and redox-independent fashion. The protein is Thioredoxin-1 (trx-1) of Caenorhabditis elegans.